Reading from the N-terminus, the 343-residue chain is Ketol-acid reductoisomerase (NADP(+)) (343 aa).

The 180-residue stretch at 7–186 (TTVYYDEDAD…GCTRAGVIET (180 aa)) folds into the KARI N-terminal Rossmann domain. NADP(+)-binding positions include 30–33 (YGSQ), R53, S56, S58, and 88–91 (DTIQ). The active site involves H112. Residue G138 coordinates NADP(+). A KARI C-terminal knotted domain is found at 187-329 (SFQEEVETDL…ENLRELFAWG (143 aa)). Residues D195, E199, E231, and E235 each coordinate Mg(2+). Residue S256 coordinates substrate.

The protein belongs to the ketol-acid reductoisomerase family. The cofactor is Mg(2+).

It carries out the reaction (2R)-2,3-dihydroxy-3-methylbutanoate + NADP(+) = (2S)-2-acetolactate + NADPH + H(+). The catalysed reaction is (2R,3R)-2,3-dihydroxy-3-methylpentanoate + NADP(+) = (S)-2-ethyl-2-hydroxy-3-oxobutanoate + NADPH + H(+). Its pathway is amino-acid biosynthesis; L-isoleucine biosynthesis; L-isoleucine from 2-oxobutanoate: step 2/4. It functions in the pathway amino-acid biosynthesis; L-valine biosynthesis; L-valine from pyruvate: step 2/4. Its function is as follows. Involved in the biosynthesis of branched-chain amino acids (BCAA). Catalyzes an alkyl-migration followed by a ketol-acid reduction of (S)-2-acetolactate (S2AL) to yield (R)-2,3-dihydroxy-isovalerate. In the isomerase reaction, S2AL is rearranged via a Mg-dependent methyl migration to produce 3-hydroxy-3-methyl-2-ketobutyrate (HMKB). In the reductase reaction, this 2-ketoacid undergoes a metal-dependent reduction by NADPH to yield (R)-2,3-dihydroxy-isovalerate. The protein is Ketol-acid reductoisomerase (NADP(+)) of Haloarcula marismortui (strain ATCC 43049 / DSM 3752 / JCM 8966 / VKM B-1809) (Halobacterium marismortui).